Reading from the N-terminus, the 448-residue chain is MLWLALGPFCAMENQVLVIRIKIPNSGAVDWTVHSGPQLLFRDVLDVIGQVLPEATTTAFEYEDEDGDRITVRSDEEMKAMLSYYYSTVMEQQVNGQLIEPLQIFPRACKPPGERNIHGLKVNTRAGPSQHTSPVVSDSLPSNSLKKSSAELRKILANGQMNEQDIRYRDTLGHGNGGTVYKAHHVPSGKILAVKVILLDITLELQKQIMSELEILYKCDSSYIIGFYGAFFVENRISICTEFMDGGSLDVYRKIPEHVLGRIAVAVVKGLTYLWSLKILHRDVKPSNMLVNTGGQVKLCDFGVSTQLVNSIAKTYVGTNAYMAPERISGEQYGIHSDVWSLGISFMELALGRFPYPQIQKNQGSLMPLQLLQCIVDEDSPVLPLGEFSEPFVHFITQCMRKQPKERPAPEELMGHPFIVQFNDGNSTVVSMWVCRALEERRSQQGPP.

Positions 18–25 (VIRIKIPN) are interaction with MAPK7. Positions 18-109 (VIRIKIPNSG…EPLQIFPRAC (92 aa)) constitute a PB1 domain. Residues 64–68 (DEDGD) are interaction with MAP3K2/MAP3K3. The tract at residues 116–144 (NIHGLKVNTRAGPSQHTSPVVSDSLPSNS) is disordered. Residues 117-131 (IHGLKVNTRAGPSQH) are interaction with MAPK7. A compositionally biased stretch (polar residues) spans 126–144 (AGPSQHTSPVVSDSLPSNS). The 254-residue stretch at 166–419 (IRYRDTLGHG…PEELMGHPFI (254 aa)) folds into the Protein kinase domain. Residues 172 to 180 (LGHGNGGTV) and K195 contribute to the ATP site. D283 (proton acceptor) is an active-site residue. S311 carries the post-translational modification Phosphoserine. T315 is modified (phosphothreonine).

This sequence belongs to the protein kinase superfamily. STE Ser/Thr protein kinase family. MAP kinase kinase subfamily. Interacts with PARD6A, MAP3K3 and MAPK7. Forms a complex with SQSTM1 and PRKCZ or PRKCI. Mg(2+) serves as cofactor. Activated by phosphorylation on Ser/Thr by MAP kinase kinase kinases.

Its subcellular location is the cytoplasm. The enzyme catalyses L-seryl-[protein] + ATP = O-phospho-L-seryl-[protein] + ADP + H(+). It catalyses the reaction L-threonyl-[protein] + ATP = O-phospho-L-threonyl-[protein] + ADP + H(+). The catalysed reaction is L-tyrosyl-[protein] + ATP = O-phospho-L-tyrosyl-[protein] + ADP + H(+). Acts as a scaffold for the formation of a ternary MAP3K2/MAP3K3-MAP3K5-MAPK7 signaling complex. Activation of this pathway appears to play a critical role in protecting cells from stress-induced apoptosis, neuronal survival and cardiac development and angiogenesis. As part of the MAPK/ERK signaling pathway, acts as a negative regulator of apoptosis in cardiomyocytes via promotion of STUB1/CHIP-mediated ubiquitination and degradation of ICER-type isoforms of CREM. The protein is Dual specificity mitogen-activated protein kinase kinase 5 (Map2k5) of Mus musculus (Mouse).